The primary structure comprises 215 residues: MTLRSEILVNKNVLPTAEQALPGRETPMTLPETHFVNGNPLLGPFTSNVEFAIFGLGCFWGAERRLWQQEGVVSTVAGYAGGFTPNPTYEEVCSGLTGHTEVVLVVYEPEKISYDSLLKVFWEAHNPTQGMRQGNDIGTQYRSVIYCTTPEQLAAAKASADAFQAELSKAGLGGITTEIEEAPTVYFAETYHQQYLAKNPQGYCGLGGTGVCLPA.

Cysteine 58 is a catalytic residue.

It belongs to the MsrA Met sulfoxide reductase family.

The catalysed reaction is L-methionyl-[protein] + [thioredoxin]-disulfide + H2O = L-methionyl-(S)-S-oxide-[protein] + [thioredoxin]-dithiol. The enzyme catalyses [thioredoxin]-disulfide + L-methionine + H2O = L-methionine (S)-S-oxide + [thioredoxin]-dithiol. Has an important function as a repair enzyme for proteins that have been inactivated by oxidation. Catalyzes the reversible oxidation-reduction of methionine sulfoxide in proteins to methionine. In Pseudomonas syringae pv. tomato (strain ATCC BAA-871 / DC3000), this protein is Peptide methionine sulfoxide reductase MsrA.